Consider the following 271-residue polypeptide: DNA-binding protein HEXBP (271 aa).

2 stretches are compositionally biased toward basic and acidic residues: residues 1 to 12 (MSETEDVKRPRT) and 21 to 42 (CGKE…DERS). The interval 1 to 42 (MSETEDVKRPRTESSTSCRNCGKEGHYARECPEADSKGDERS) is disordered. 4 consecutive CCHC-type zinc fingers follow at residues 16 to 33 (TSCR…ECPE), 43 to 60 (TTCF…ECPN), 70 to 87 (MTCF…DCPN), and 97 to 114 (FECY…DCPS). The tract at residues 107–136 (HLSRDCPSSQGGSRGGYGQKRGRSGAQGGY) is disordered. The span at 118-136 (GSRGGYGQKRGRSGAQGGY) shows a compositional bias: gly residues. 5 CCHC-type zinc fingers span residues 140-157 (RTCY…DCPN), 168-185 (RTCY…DCPN), 196-213 (RKCY…ECPS), 222-239 (RACY…ECPE), and 253-270 (RTCY…DCPS).

It localises to the nucleus. Its function is as follows. Binds to single-stranded DNA located in the 5' hexanucleotide repeat region of the L.major leishmanolysin (GP63) gene. The chain is DNA-binding protein HEXBP (HEXBP) from Leishmania major.